A 275-amino-acid chain; its full sequence is Large ribosomal subunit protein uL2 (275 aa).

The disordered stretch occupies residues 220 to 275; that stretch reads VRGAAMNPRDHPHGGGEGRAPRGMPTPKTKWGKPARGVKTRHNPRTDPFIIRRRTR. Over residues 227-239 the composition is skewed to basic and acidic residues; sequence PRDHPHGGGEGRA. Over residues 249-262 the composition is skewed to basic residues; the sequence is KWGKPARGVKTRHN.

The protein belongs to the universal ribosomal protein uL2 family. In terms of assembly, part of the 50S ribosomal subunit. Forms a bridge to the 30S subunit in the 70S ribosome.

In terms of biological role, one of the primary rRNA binding proteins. Required for association of the 30S and 50S subunits to form the 70S ribosome, for tRNA binding and peptide bond formation. It has been suggested to have peptidyltransferase activity; this is somewhat controversial. Makes several contacts with the 16S rRNA in the 70S ribosome. The polypeptide is Large ribosomal subunit protein uL2 (Roseiflexus sp. (strain RS-1)).